Here is a 469-residue protein sequence, read N- to C-terminus: Cysteine--tRNA ligase (469 aa).

Cysteine 28 is a Zn(2+) binding site. The 'HIGH' region signature appears at 30-40 (PTVYNYIHIGN). Zn(2+) contacts are provided by cysteine 213, histidine 238, and glutamate 242. The 'KMSKS' region signature appears at 270-274 (KMSKS). Lysine 273 lines the ATP pocket.

The protein belongs to the class-I aminoacyl-tRNA synthetase family. In terms of assembly, monomer. Requires Zn(2+) as cofactor.

The protein resides in the cytoplasm. It carries out the reaction tRNA(Cys) + L-cysteine + ATP = L-cysteinyl-tRNA(Cys) + AMP + diphosphate. The protein is Cysteine--tRNA ligase of Leuconostoc citreum (strain KM20).